Reading from the N-terminus, the 619-residue chain is Tyrosine-protein kinase ZAP-70 (619 aa).

The SH2 1 domain maps to 10–102 (FFYGSISRAE…GLPCNLRKPC (93 aa)). The tract at residues 103-162 (NRPSGLEPQPGVFDCLRDAMVRDYVRQTWKLEGEALEQAIISQAPQVEKLIATTAHERMP) is interdomain A. In terms of domain architecture, SH2 2 spans 163-254 (WYHSSLTREE…GLIYCLKEAC (92 aa)). Tyr-248 is modified (phosphotyrosine). Residues 255 to 337 (PNSSASNASG…KKLFLKRDNL (83 aa)) form an interdomain B region. The tract at residues 260–309 (SNASGAAAPTLPAHPSTLTHPQRRIDTLNSDGYTPEPARITSPDKPRPMP) is disordered. Position 289 is a phosphoserine (Ser-289). A Phosphotyrosine modification is found at Tyr-292. Residue Tyr-315 is modified to Phosphotyrosine; by LCK. Tyr-319 is subject to Phosphotyrosine. The 263-residue stretch at 338–600 (LIADIELGCG…QRMRACYYSL (263 aa)) folds into the Protein kinase domain. Residues 345–352 (GCGNFGSV) and Lys-369 each bind ATP. The active-site Proton acceptor is Asp-461. Tyr-492 and Tyr-493 each carry phosphotyrosine. Lys-544 participates in a covalent cross-link: Glycyl lysine isopeptide (Lys-Gly) (interchain with G-Cter in ubiquitin). At Lys-603 the chain carries N6-acetyllysine.

Belongs to the protein kinase superfamily. Tyr protein kinase family. SYK/ZAP-70 subfamily. Interacts with CD247/CD3Z; this interaction docks ZAP70 at the stimulated TCR. Interacts with NFAM1. Interacts with adapter protein SLA; this interaction negatively regulates T-cell receptor signaling. Interacts with FCRL3. Interacts with VAV1. Interacts with CBL; this interaction promotes ubiquitination, internalization and subsequent degradation of CD247/CD3Z. Identified in a complex with CBL and UBE2L3. Interacts with SHB. Interacts with adapter protein SLA2; this interaction negatively regulates T-cell receptor signaling. Interacts with CBLB. Interacts (via SH2 domains) with RHOH; this interaction regulates ZAP70 subcellular localization. Interacts with DEF6. Interacts (ubiquitinated form) with OTUD7B and UBASH3B. In terms of processing, phosphorylated on tyrosine residues upon T-cell antigen receptor (TCR) stimulation. Phosphorylation of Tyr-315 and Tyr-319 are essential for ZAP70 positive function on T-lymphocyte activation whereas Tyr-292 has a negative regulatory role. Within the C-terminal kinase domain, Tyr-492 and Tyr-493 are phosphorylated after TCR induction, Tyr-492 playing a negative regulatory role and Tyr-493 a positive. Tyr-493 is dephosphorylated by PTN22. Ubiquitinated in response to T cell activation. Deubiquitinated by OTUD7B. Expressed in T- and natural killer cells. Also present in early thymocytes and pro/pre B-cells.

The protein resides in the cytoplasm. It localises to the cell membrane. The catalysed reaction is L-tyrosyl-[protein] + ATP = O-phospho-L-tyrosyl-[protein] + ADP + H(+). Activated by phosphorylation at Tyr-493 in the activation loop. Inhibited by staurosporine. Functionally, tyrosine kinase that plays an essential role in regulation of the adaptive immune response. Regulates motility, adhesion and cytokine expression of mature T-cells, as well as thymocyte development. Also contributes to the development and activation of primary B-lymphocytes. When antigen presenting cells (APC) activate T-cell receptor (TCR), a serie of phosphorylations lead to the recruitment of ZAP70 to the doubly phosphorylated TCR component CD247/CD3Z through ITAM motif at the plasma membrane. This recruitment serves to localization to the stimulated TCR and to relieve its autoinhibited conformation. Release of ZAP70 active conformation is further stabilized by phosphorylation mediated by LCK. Subsequently, ZAP70 phosphorylates at least 2 essential adapter proteins: LAT and LCP2. In turn, a large number of signaling molecules are recruited and ultimately lead to lymphokine production, T-cell proliferation and differentiation. Furthermore, ZAP70 controls cytoskeleton modifications, adhesion and mobility of T-lymphocytes, thus ensuring correct delivery of effectors to the APC. ZAP70 is also required for TCR-CD247/CD3Z internalization and degradation through interaction with the E3 ubiquitin-protein ligase CBL and adapter proteins SLA and SLA2. Thus, ZAP70 regulates both T-cell activation switch on and switch off by modulating TCR expression at the T-cell surface. During thymocyte development, ZAP70 promotes survival and cell-cycle progression of developing thymocytes before positive selection (when cells are still CD4/CD8 double negative). Additionally, ZAP70-dependent signaling pathway may also contribute to primary B-cells formation and activation through B-cell receptor (BCR). The sequence is that of Tyrosine-protein kinase ZAP-70 (ZAP70) from Homo sapiens (Human).